The sequence spans 379 residues: UPF0450 protein C17orf58 homolog (379 aa).

An N-terminal signal peptide occupies residues methionine 1–alanine 17. Disordered stretches follow at residues arginine 76 to threonine 95 and threonine 162 to histidine 194. A compositionally biased stretch (basic and acidic residues) spans serine 180–histidine 194. Intrachain disulfides connect cysteine 234–cysteine 308, cysteine 238–cysteine 312, and cysteine 249–cysteine 378. Positions cysteine 234 to cysteine 378 constitute an NTR domain.

Belongs to the UPF0450 family.

This chain is UPF0450 protein C17orf58 homolog, found in Xenopus laevis (African clawed frog).